The primary structure comprises 166 residues: Putative 4-hydroxy-4-methyl-2-oxoglutarate aldolase (166 aa).

Residues 74–77 and R96 contribute to the substrate site; that span reads GDQI. D97 contacts a divalent metal cation.

This sequence belongs to the class II aldolase/RraA-like family. In terms of assembly, homotrimer. A divalent metal cation is required as a cofactor.

It catalyses the reaction 4-hydroxy-4-methyl-2-oxoglutarate = 2 pyruvate. The catalysed reaction is oxaloacetate + H(+) = pyruvate + CO2. In terms of biological role, catalyzes the aldol cleavage of 4-hydroxy-4-methyl-2-oxoglutarate (HMG) into 2 molecules of pyruvate. Also contains a secondary oxaloacetate (OAA) decarboxylase activity due to the common pyruvate enolate transition state formed following C-C bond cleavage in the retro-aldol and decarboxylation reactions. The chain is Putative 4-hydroxy-4-methyl-2-oxoglutarate aldolase from Xanthomonas oryzae pv. oryzae (strain MAFF 311018).